The sequence spans 236 residues: Ubiquinone biosynthesis O-methyltransferase (236 aa).

4 residues coordinate S-adenosyl-L-methionine: arginine 39, glycine 59, aspartate 80, and methionine 124.

This sequence belongs to the methyltransferase superfamily. UbiG/COQ3 family.

The enzyme catalyses a 3-demethylubiquinol + S-adenosyl-L-methionine = a ubiquinol + S-adenosyl-L-homocysteine + H(+). It catalyses the reaction a 3-(all-trans-polyprenyl)benzene-1,2-diol + S-adenosyl-L-methionine = a 2-methoxy-6-(all-trans-polyprenyl)phenol + S-adenosyl-L-homocysteine + H(+). It participates in cofactor biosynthesis; ubiquinone biosynthesis. Its function is as follows. O-methyltransferase that catalyzes the 2 O-methylation steps in the ubiquinone biosynthetic pathway. This is Ubiquinone biosynthesis O-methyltransferase from Shewanella baltica (strain OS223).